Here is a 636-residue protein sequence, read N- to C-terminus: MLDFFTIFSKGGLVLWCFQGVSDSCTGPVNALIRSVLLQERGGNNSFTHEALTLKYKLDNQFELVFVVGFQKILTLTYVDKLIDDVHRLFRDKYRTEIQQQSALSLLNGTFDFQNDFLRLLREAEESSKIRAPTTMKKFEDSEKAKKPVRSMIETRGEKTKEKAKNNKKRGAKKEGSDGTLATSKTAPAEKSGLSAGPENGELSKEELIRRKREEFIQKHGKGLDKSSKSTKSDTPKEKGKKAPRVWELGGCANKEVLDYSTPTTNGTPEAALSEDINLIRGTGPGGQLQDLDCSSSDDEGATQNTKPSATKGTLGGMFGMLKGLVGSKSLSREDMESVLDKMRDHLIAKNVAADIAVQLCESVANKLEGKVMGTFSTVTSTVKQALQESLVQILQPQRRVDMLRDIMDAQRRQRPYVVTFCGVNGVGKSTNLAKISFWLLENGFSVLIAACDTFRAGAVEQLRTHTRRLTALHPPEKHGGRTMVQLFEKGYGKDAAGIAMEAIAFARNQGFDVVLVDTAGRMQDNAPLMTALAKLITVNTPDLVLFVGEALVGNEAVDQLVKFNRALADHSMAQTPRLIDGIVLTKFDTIDDKVGAAISMTYITSKPIVFVGTGQTYCDLRSLNAKAVVAALMKA.

Disordered regions lie at residues 132-205 (APTT…ELSK), 217-246 (IQKH…APRV), and 280-314 (IRGT…TKGT). Composition is skewed to basic and acidic residues over residues 137 to 146 (KKFEDSEKAK) and 153 to 165 (IETR…EKAK). Phosphoserine is present on Ser-177. The span at 217–238 (IQKHGKGLDKSSKSTKSDTPKE) shows a compositional bias: basic and acidic residues. At Thr-283 the chain carries Phosphothreonine. A phosphoserine mark is found at Ser-295, Ser-296, and Ser-297. Over residues 302 to 312 (ATQNTKPSATK) the composition is skewed to polar residues. Phosphothreonine is present on Thr-303. Residues 417 to 634 (YVVTFCGVNG…NAKAVVAALM (218 aa)) are NG domain. GTP is bound by residues 423–430 (GVNGVGKS) and 518–522 (DTAGR). Residue Thr-576 is modified to Phosphothreonine. Residue 586 to 589 (TKFD) participates in GTP binding.

This sequence belongs to the GTP-binding SRP family. As to quaternary structure, heterodimer with SRPRB. Interacts with the signal recognition particle (SRP) complex subunit SRP54.

The protein localises to the endoplasmic reticulum membrane. In terms of biological role, component of the SRP (signal recognition particle) receptor. Ensures, in conjunction with the signal recognition particle, the correct targeting of the nascent secretory proteins to the endoplasmic reticulum membrane system. Forms a guanosine 5'-triphosphate (GTP)-dependent complex with the SRP subunit SRP54. SRP receptor compaction and GTPase rearrangement drive SRP-mediated cotranslational protein translocation into the ER. This Mus musculus (Mouse) protein is Signal recognition particle receptor subunit alpha.